The chain runs to 70 residues: Large ribosomal subunit protein bL31 (70 aa).

Positions 17, 19, 37, and 40 each coordinate Zn(2+).

It belongs to the bacterial ribosomal protein bL31 family. Type A subfamily. Part of the 50S ribosomal subunit. Zn(2+) serves as cofactor.

Binds the 23S rRNA. This Clostridium kluyveri (strain NBRC 12016) protein is Large ribosomal subunit protein bL31.